We begin with the raw amino-acid sequence, 419 residues long: Mitochondrial chaperone BCS1 (419 aa).

The Mitochondrial intermembrane portion of the chain corresponds to 2-15 (PLSDFILALKDNPY). Residues 16–32 (FGAGFGLVGVGTALALA) form a helical membrane-spanning segment. The Mitochondrial matrix segment spans residues 33 to 419 (RKGVQLGLVA…AIHNAESLRR (387 aa)). The residue at position 181 (Tyr181) is a Phosphotyrosine. Residue 230 to 237 (GPPGCGKS) coordinates ATP.

It belongs to the AAA ATPase family. BCS1 subfamily. Interacts with LETM1. Ubiquitous.

The protein localises to the mitochondrion inner membrane. It carries out the reaction ATP + H2O = ADP + phosphate + H(+). Chaperone necessary for the incorporation of Rieske iron-sulfur protein UQCRFS1 into the mitochondrial respiratory chain complex III. Plays an important role in the maintenance of mitochondrial tubular networks, respiratory chain assembly and formation of the LETM1 complex. This Homo sapiens (Human) protein is Mitochondrial chaperone BCS1 (BCS1L).